We begin with the raw amino-acid sequence, 396 residues long: MTVTIKELTNHNYIDHELSATLDSTDAFEGPEKLLEIWFFPHKKSITTEKTLRNIGMDRWIEILKLVKCEVLSMKKTKELDAFLLSESSLFVFDHKLTMKTCGTTTTLFCLEKLFQIVEQELSWAFRTTQGGKYKPFKVFYSRRCFLFPCKQAAIHQNWADEVDYLNKFFDNGKSYSVGRNDKSNHWNLYVTETDRSTPKGKEYIEDDDETFEVLMTELDPECASKFVCGPEASTTALVEPNEDKGHNLGYQMTKNTRLDEIYVNSAQDSDLSFHHDAFAFTPCGYSSNMILAEKYYYTLHVTPEKGWSYASFESNIPVFDISQGKQDNLDVLLHILNVFQPREFSMTFFTKNYQNQSFQKLLSINESLPDYIKLDKIVYDLDDYHLFYMKLQKKI.

Active-site residues include glutamate 29 and glutamate 32. Serine 88 acts as the Schiff-base intermediate with substrate; via pyruvic acid in catalysis. Serine 88 is subject to Pyruvic acid (Ser); by autocatalysis. The active-site Proton donor; for catalytic activity is cysteine 102. Catalysis depends on proton acceptor; for processing activity residues serine 287 and histidine 301.

This sequence belongs to the eukaryotic AdoMetDC family. Pyruvate is required as a cofactor. Post-translationally, is synthesized initially as an inactive proenzyme. Formation of the active enzyme involves a self-maturation process in which the active site pyruvoyl group is generated from an internal serine residue via an autocatalytic post-translational modification. Two non-identical subunits are generated from the proenzyme in this reaction, and the pyruvate is formed at the N-terminus of the alpha chain, which is derived from the carboxyl end of the proenzyme. The post-translation cleavage follows an unusual pathway, termed non-hydrolytic serinolysis, in which the side chain hydroxyl group of the serine supplies its oxygen atom to form the C-terminus of the beta chain, while the remainder of the serine residue undergoes an oxidative deamination to produce ammonia and the pyruvoyl group blocking the N-terminus of the alpha chain.

It carries out the reaction S-adenosyl-L-methionine + H(+) = S-adenosyl 3-(methylsulfanyl)propylamine + CO2. Its pathway is amine and polyamine biosynthesis; S-adenosylmethioninamine biosynthesis; S-adenosylmethioninamine from S-adenosyl-L-methionine: step 1/1. Functionally, catalyzes the decarboxylation of S-adenosylmethionine, a key step in the biosynthetic pathway for spermidine and spermine. It is essential for normal growth, sporulation, and maintenance of ds-RNA virus. In Saccharomyces cerevisiae (strain ATCC 204508 / S288c) (Baker's yeast), this protein is S-adenosylmethionine decarboxylase proenzyme (SPE2).